A 228-amino-acid chain; its full sequence is Potassium/proton antiporter CemA (228 aa).

3 helical membrane passes run 6–26, 113–133, and 188–208; these read FIPL…SFSF, IICF…LFIL, and IISG…KYWI.

It belongs to the CemA family.

It is found in the plastid. The protein resides in the chloroplast inner membrane. It catalyses the reaction K(+)(in) + H(+)(out) = K(+)(out) + H(+)(in). Contributes to K(+)/H(+) antiport activity by supporting proton efflux to control proton extrusion and homeostasis in chloroplasts in a light-dependent manner to modulate photosynthesis. Prevents excessive induction of non-photochemical quenching (NPQ) under continuous-light conditions. Indirectly promotes efficient inorganic carbon uptake into chloroplasts. In Populus alba (White poplar), this protein is Potassium/proton antiporter CemA.